The chain runs to 231 residues: MAHPSQLGLQDAASPVMEELLHFHDHALMIVFLISTLVFYIILAMMTTKMTDKYILDAQEIEIVWTLLPAIVLILVALPSLRILYLIDEVENPHLTIKAMGHQWYWSYEYTDYEELSFDSYMTPLQDLNPGQFRLLETDHRMVIPMESLIRVLISAEDVLHSWAVPALGVKMDAVPGRLNQITFMISRPGLYYGQCSEICGANHSFMPIVLEAIPLDPFEDWSSSMLEEAX.

At 1–14 the chain is on the mitochondrial intermembrane side; the sequence is MAHPSQLGLQDAAS. Residues 15–45 form a helical membrane-spanning segment; that stretch reads PVMEELLHFHDHALMIVFLISTLVFYIILAM. Over 46 to 59 the chain is Mitochondrial matrix; it reads MTTKMTDKYILDAQ. Residues 60-87 traverse the membrane as a helical segment; it reads EIEIVWTLLPAIVLILVALPSLRILYLI. At 88 to 231 the chain is on the mitochondrial intermembrane side; the sequence is DEVENPHLTI…WSSSMLEEAX (144 aa). Cu cation is bound by residues histidine 161, cysteine 196, glutamate 198, cysteine 200, histidine 204, and methionine 207. Glutamate 198 lines the Mg(2+) pocket.

Belongs to the cytochrome c oxidase subunit 2 family. In terms of assembly, component of the cytochrome c oxidase (complex IV, CIV), a multisubunit enzyme composed of 14 subunits. The complex is composed of a catalytic core of 3 subunits MT-CO1, MT-CO2 and MT-CO3, encoded in the mitochondrial DNA, and 11 supernumerary subunits COX4I, COX5A, COX5B, COX6A, COX6B, COX6C, COX7A, COX7B, COX7C, COX8 and NDUFA4, which are encoded in the nuclear genome. The complex exists as a monomer or a dimer and forms supercomplexes (SCs) in the inner mitochondrial membrane with NADH-ubiquinone oxidoreductase (complex I, CI) and ubiquinol-cytochrome c oxidoreductase (cytochrome b-c1 complex, complex III, CIII), resulting in different assemblies (supercomplex SCI(1)III(2)IV(1) and megacomplex MCI(2)III(2)IV(2)). Found in a complex with TMEM177, COA6, COX18, COX20, SCO1 and SCO2. Interacts with TMEM177 in a COX20-dependent manner. Interacts with COX20. Interacts with COX16. It depends on Cu cation as a cofactor.

It localises to the mitochondrion inner membrane. The catalysed reaction is 4 Fe(II)-[cytochrome c] + O2 + 8 H(+)(in) = 4 Fe(III)-[cytochrome c] + 2 H2O + 4 H(+)(out). Its function is as follows. Component of the cytochrome c oxidase, the last enzyme in the mitochondrial electron transport chain which drives oxidative phosphorylation. The respiratory chain contains 3 multisubunit complexes succinate dehydrogenase (complex II, CII), ubiquinol-cytochrome c oxidoreductase (cytochrome b-c1 complex, complex III, CIII) and cytochrome c oxidase (complex IV, CIV), that cooperate to transfer electrons derived from NADH and succinate to molecular oxygen, creating an electrochemical gradient over the inner membrane that drives transmembrane transport and the ATP synthase. Cytochrome c oxidase is the component of the respiratory chain that catalyzes the reduction of oxygen to water. Electrons originating from reduced cytochrome c in the intermembrane space (IMS) are transferred via the dinuclear copper A center (CU(A)) of subunit 2 and heme A of subunit 1 to the active site in subunit 1, a binuclear center (BNC) formed by heme A3 and copper B (CU(B)). The BNC reduces molecular oxygen to 2 water molecules using 4 electrons from cytochrome c in the IMS and 4 protons from the mitochondrial matrix. In Latimeria chalumnae (Coelacanth), this protein is Cytochrome c oxidase subunit 2 (MT-CO2).